A 600-amino-acid chain; its full sequence is NADH-quinone oxidoreductase subunit C/D (600 aa).

The tract at residues 1-190 is NADH dehydrogenase I subunit C; that stretch reads MIDLMPKKNT…EPFFLNEQKE (190 aa). Positions 214-600 are NADH dehydrogenase I subunit D; it reads EFMFLNLGPN…IDFVMSDVDR (387 aa).

This sequence in the N-terminal section; belongs to the complex I 30 kDa subunit family. In the C-terminal section; belongs to the complex I 49 kDa subunit family. As to quaternary structure, NDH-1 is composed of 13 different subunits. Subunits NuoB, CD, E, F, and G constitute the peripheral sector of the complex.

The protein resides in the cell inner membrane. It catalyses the reaction a quinone + NADH + 5 H(+)(in) = a quinol + NAD(+) + 4 H(+)(out). Its function is as follows. NDH-1 shuttles electrons from NADH, via FMN and iron-sulfur (Fe-S) centers, to quinones in the respiratory chain. The immediate electron acceptor for the enzyme in this species is believed to be ubiquinone. Couples the redox reaction to proton translocation (for every two electrons transferred, four hydrogen ions are translocated across the cytoplasmic membrane), and thus conserves the redox energy in a proton gradient. The protein is NADH-quinone oxidoreductase subunit C/D of Buchnera aphidicola subsp. Acyrthosiphon pisum (strain APS) (Acyrthosiphon pisum symbiotic bacterium).